We begin with the raw amino-acid sequence, 103 residues long: Nucleoid-associated protein BH0035 (103 aa).

The segment covering 1–20 (MKNMGQMMKQMQKMQKQMMK) has biased composition (low complexity). Residues 1–29 (MKNMGQMMKQMQKMQKQMMKAQEELKEKT) are disordered.

Belongs to the YbaB/EbfC family. Homodimer.

It is found in the cytoplasm. Its subcellular location is the nucleoid. Functionally, binds to DNA and alters its conformation. May be involved in regulation of gene expression, nucleoid organization and DNA protection. This chain is Nucleoid-associated protein BH0035, found in Halalkalibacterium halodurans (strain ATCC BAA-125 / DSM 18197 / FERM 7344 / JCM 9153 / C-125) (Bacillus halodurans).